Reading from the N-terminus, the 442-residue chain is Trigger factor (442 aa).

Residues 165–250 form the PPIase FKBP-type domain; sequence DDRVIIDFEG…LQKVMAPELP (86 aa).

This sequence belongs to the FKBP-type PPIase family. Tig subfamily.

The protein localises to the cytoplasm. It catalyses the reaction [protein]-peptidylproline (omega=180) = [protein]-peptidylproline (omega=0). Functionally, involved in protein export. Acts as a chaperone by maintaining the newly synthesized protein in an open conformation. Functions as a peptidyl-prolyl cis-trans isomerase. In Coxiella burnetii (strain CbuG_Q212) (Coxiella burnetii (strain Q212)), this protein is Trigger factor.